Here is a 281-residue protein sequence, read N- to C-terminus: 2-dehydro-3-deoxyphosphooctonate aldolase (281 aa).

The protein belongs to the KdsA family.

It localises to the cytoplasm. It carries out the reaction D-arabinose 5-phosphate + phosphoenolpyruvate + H2O = 3-deoxy-alpha-D-manno-2-octulosonate-8-phosphate + phosphate. The protein operates within carbohydrate biosynthesis; 3-deoxy-D-manno-octulosonate biosynthesis; 3-deoxy-D-manno-octulosonate from D-ribulose 5-phosphate: step 2/3. It participates in bacterial outer membrane biogenesis; lipopolysaccharide biosynthesis. This Pseudomonas syringae pv. syringae (strain B728a) protein is 2-dehydro-3-deoxyphosphooctonate aldolase.